Here is a 288-residue protein sequence, read N- to C-terminus: Acetyl-coenzyme A carboxylase carboxyl transferase subunit beta (288 aa).

The region spanning 34 to 288 (LFAKCPACKH…HLVAFHGGVS (255 aa)) is the CoA carboxyltransferase N-terminal domain. Residues cysteine 38, cysteine 41, cysteine 56, and cysteine 59 each contribute to the Zn(2+) site. The C4-type zinc-finger motif lies at 38–59 (CPACKHMIYQKDLGPAKICPTC).

This sequence belongs to the AccD/PCCB family. In terms of assembly, acetyl-CoA carboxylase is a heterohexamer composed of biotin carboxyl carrier protein (AccB), biotin carboxylase (AccC) and two subunits each of ACCase subunit alpha (AccA) and ACCase subunit beta (AccD). Zn(2+) is required as a cofactor.

The protein localises to the cytoplasm. The enzyme catalyses N(6)-carboxybiotinyl-L-lysyl-[protein] + acetyl-CoA = N(6)-biotinyl-L-lysyl-[protein] + malonyl-CoA. It participates in lipid metabolism; malonyl-CoA biosynthesis; malonyl-CoA from acetyl-CoA: step 1/1. Component of the acetyl coenzyme A carboxylase (ACC) complex. Biotin carboxylase (BC) catalyzes the carboxylation of biotin on its carrier protein (BCCP) and then the CO(2) group is transferred by the transcarboxylase to acetyl-CoA to form malonyl-CoA. The protein is Acetyl-coenzyme A carboxylase carboxyl transferase subunit beta of Streptococcus equi subsp. zooepidemicus (strain H70).